Here is a 384-residue protein sequence, read N- to C-terminus: 5-cytosine rRNA methyltransferase NSUN4 (384 aa).

The N-terminal 25 residues, 1–25 (MAALTLRGVRELLKRVDLATVPRRH), are a transit peptide targeting the mitochondrion. 4 residues coordinate S-adenosyl-L-methionine: glycine 185, glycine 186, lysine 187, and aspartate 204. The residue at position 206 (serine 206) is a Phosphoserine. Positions 209, 237, 238, and 255 each coordinate S-adenosyl-L-methionine. The active-site Nucleophile is the cysteine 310.

The protein belongs to the class I-like SAM-binding methyltransferase superfamily. RsmB/NOP family. As to quaternary structure, heterodimer with MTERFD2/MTERF4; this interaction seems to be required for NSUN4 recruitment to the mitochondrial large ribosomal subunit.

It localises to the mitochondrion. The enzyme catalyses a cytidine in rRNA + S-adenosyl-L-methionine = a 5-methylcytidine in rRNA + S-adenosyl-L-homocysteine + H(+). It carries out the reaction a cytidine in mRNA + S-adenosyl-L-methionine = a 5-methylcytidine in mRNA + S-adenosyl-L-homocysteine + H(+). Its function is as follows. Mitochondrial RNA cytosine C(5)-methyltransferase that methylates cytosine to 5-methylcytosine (m5C) in various RNAs, such as rRNAs, mRNAs and some long non-coding RNAs (lncRNAs). Involved in mitochondrial ribosome small subunit (SSU) maturation by catalyzing methylation of mitochondrial 12S rRNA; the function is independent of MTERFD2/MTERF4 and assembled mitochondrial ribosome large subunit (LSU). Targeted to LSU by MTERFD2/MTERF4 and probably is involved in a final step in ribosome biogenesis to ensure that SSU and LSU are assembled. In vitro can methylate 16S rRNA of the LSU; the methylation is enhanced by MTERFD/MTERF4. Also acts as a regulator of innate immunity by marking double-stranded mitochondrial RNAs(mt-dsRNAs) generated in response to stress: catalyzes m5C modification on mitochondrial RNAs, such as a mRNAs and lncRNAs, with a preference for the termini of light-strand lncRNAs, promoting their degradation and cytosolic release. Modified light-strand lncRNAs are then recognized by C1QBP reader and recruited to the mitochondrial degradosome complex, which promotes their degradation. The polypeptide is 5-cytosine rRNA methyltransferase NSUN4 (Homo sapiens (Human)).